Here is a 271-residue protein sequence, read N- to C-terminus: Phosphate import ATP-binding protein PstB (271 aa).

Residues 24–266 (MIGNDVSVYY…PDDQRTQDYI (243 aa)) form the ABC transporter domain. ATP is bound at residue 56–63 (GPSGCGKS).

Belongs to the ABC transporter superfamily. Phosphate importer (TC 3.A.1.7) family. In terms of assembly, the complex is composed of two ATP-binding proteins (PstB), two transmembrane proteins (PstC and PstA) and a solute-binding protein (PstS).

Its subcellular location is the cell inner membrane. It catalyses the reaction phosphate(out) + ATP + H2O = ADP + 2 phosphate(in) + H(+). Its function is as follows. Part of the ABC transporter complex PstSACB involved in phosphate import. Responsible for energy coupling to the transport system. The sequence is that of Phosphate import ATP-binding protein PstB from Rhizobium meliloti (strain 1021) (Ensifer meliloti).